The primary structure comprises 311 residues: Formimidoylglutamase (311 aa).

H130, D155, H157, D159, C242, and D244 together coordinate Mn(2+).

The protein belongs to the arginase family. Mn(2+) serves as cofactor.

It catalyses the reaction N-formimidoyl-L-glutamate + H2O = formamide + L-glutamate. The protein operates within amino-acid degradation; L-histidine degradation into L-glutamate; L-glutamate from N-formimidoyl-L-glutamate (hydrolase route): step 1/1. Its function is as follows. Catalyzes the conversion of N-formimidoyl-L-glutamate to L-glutamate and formamide. The sequence is that of Formimidoylglutamase from Staphylococcus haemolyticus (strain JCSC1435).